We begin with the raw amino-acid sequence, 169 residues long: Calcium-binding protein G (169 aa).

EF-hand domains lie at K9–G44, V60–K83, A92–N127, and D133–A162. 10 residues coordinate Ca(2+): D105, D107, D109, K111, E116, D140, D142, D144, Y146, and E151.

This Dictyostelium discoideum (Social amoeba) protein is Calcium-binding protein G (cbpG).